The following is a 452-amino-acid chain: GTPase Obg (452 aa).

Positions M1–M158 constitute an Obg domain. Disordered regions lie at residues G66 to I87 and A117 to G143. One can recognise an OBG-type G domain in the interval A159–A338. Residues G165–S172, F190–N194, D212–G215, N282–D285, and S319–A321 each bind GTP. Mg(2+)-binding residues include S172 and T192. In terms of domain architecture, OCT spans I376 to Q452.

It belongs to the TRAFAC class OBG-HflX-like GTPase superfamily. OBG GTPase family. Monomer. Mg(2+) serves as cofactor.

It is found in the cytoplasm. Its function is as follows. An essential GTPase which binds GTP, GDP and possibly (p)ppGpp with moderate affinity, with high nucleotide exchange rates and a fairly low GTP hydrolysis rate. Plays a role in control of the cell cycle, stress response, ribosome biogenesis and in those bacteria that undergo differentiation, in morphogenesis control. The sequence is that of GTPase Obg from Natranaerobius thermophilus (strain ATCC BAA-1301 / DSM 18059 / JW/NM-WN-LF).